Reading from the N-terminus, the 302-residue chain is Glycine--tRNA ligase alpha subunit (302 aa).

The protein belongs to the class-II aminoacyl-tRNA synthetase family. As to quaternary structure, tetramer of two alpha and two beta subunits.

The protein localises to the cytoplasm. It catalyses the reaction tRNA(Gly) + glycine + ATP = glycyl-tRNA(Gly) + AMP + diphosphate. The sequence is that of Glycine--tRNA ligase alpha subunit from Edwardsiella ictaluri (strain 93-146).